Here is a 921-residue protein sequence, read N- to C-terminus: Isoleucine--tRNA ligase (921 aa).

The 'HIGH' region signature appears at 59–69 (PYANGHLHIGH). Glu-569 is an L-isoleucyl-5'-AMP binding site. The 'KMSKS' region motif lies at 610-614 (KMSKS). Lys-613 is a binding site for ATP. Zn(2+)-binding residues include Cys-896, Cys-899, Cys-911, and Cys-914.

It belongs to the class-I aminoacyl-tRNA synthetase family. IleS type 1 subfamily. Monomer. The cofactor is Zn(2+).

It localises to the cytoplasm. The enzyme catalyses tRNA(Ile) + L-isoleucine + ATP = L-isoleucyl-tRNA(Ile) + AMP + diphosphate. Catalyzes the attachment of isoleucine to tRNA(Ile). As IleRS can inadvertently accommodate and process structurally similar amino acids such as valine, to avoid such errors it has two additional distinct tRNA(Ile)-dependent editing activities. One activity is designated as 'pretransfer' editing and involves the hydrolysis of activated Val-AMP. The other activity is designated 'posttransfer' editing and involves deacylation of mischarged Val-tRNA(Ile). The polypeptide is Isoleucine--tRNA ligase (Campylobacter hominis (strain ATCC BAA-381 / DSM 21671 / CCUG 45161 / LMG 19568 / NCTC 13146 / CH001A)).